The following is a 42-amino-acid chain: Potassium channel toxin gamma-KTx 1.10 (42 aa).

4 disulfides stabilise this stretch: cysteine 5/cysteine 23, cysteine 11/cysteine 34, cysteine 20/cysteine 39, and cysteine 24/cysteine 41.

Expressed by the venom gland.

It localises to the secreted. In terms of biological role, blocks human Kv11.1/KCNH2/ERG1 potassium channels (reversible, IC(50)=3.4 nM). At high toxin concentrations, block of Kv11.1/KCNH2/ERG1 macroscopic current is almost complete. Does not accelerate the kinetics of the closing process and has no effect on the activation and inactivation kinetics of the Kv11.1/KCNH2/ERG1 channels. The polypeptide is Potassium channel toxin gamma-KTx 1.10 (Centruroides margaritatus (Central American bark Scorpion)).